The primary structure comprises 95 residues: Large ribosomal subunit protein bL27 (95 aa).

Positions 1-10 are excised as a propeptide; the sequence is MLLTMNLQLF. The tract at residues 12–38 is disordered; sequence HKKGGGSTSNGRDSESKRLGAKSADGQ.

The protein belongs to the bacterial ribosomal protein bL27 family. In terms of processing, the N-terminus is cleaved by ribosomal processing cysteine protease Prp.

This is Large ribosomal subunit protein bL27 from Enterococcus faecalis (strain ATCC 700802 / V583).